The sequence spans 372 residues: Glutamate 5-kinase (372 aa).

Position 14 (K14) interacts with ATP. S54, D141, and N153 together coordinate substrate. An ATP-binding site is contributed by T173–D174. In terms of domain architecture, PUA spans A280–V358.

Belongs to the glutamate 5-kinase family.

The protein localises to the cytoplasm. The enzyme catalyses L-glutamate + ATP = L-glutamyl 5-phosphate + ADP. The protein operates within amino-acid biosynthesis; L-proline biosynthesis; L-glutamate 5-semialdehyde from L-glutamate: step 1/2. Its function is as follows. Catalyzes the transfer of a phosphate group to glutamate to form L-glutamate 5-phosphate. The chain is Glutamate 5-kinase from Janthinobacterium sp. (strain Marseille) (Minibacterium massiliensis).